The following is a 251-amino-acid chain: Phosphate import ATP-binding protein PstB (251 aa).

The region spanning 5-246 is the ABC transporter domain; that stretch reads IKIRGVNFFY…PKDKRTEDYI (242 aa). 37–44 provides a ligand contact to ATP; that stretch reads GPSGCGKS.

This sequence belongs to the ABC transporter superfamily. Phosphate importer (TC 3.A.1.7) family. As to quaternary structure, the complex is composed of two ATP-binding proteins (PstB), two transmembrane proteins (PstC and PstA) and a solute-binding protein (PstS).

Its subcellular location is the cell membrane. The enzyme catalyses phosphate(out) + ATP + H2O = ADP + 2 phosphate(in) + H(+). In terms of biological role, part of the ABC transporter complex PstSACB involved in phosphate import. Responsible for energy coupling to the transport system. This chain is Phosphate import ATP-binding protein PstB, found in Dehalococcoides mccartyi (strain ATCC BAA-2266 / KCTC 15142 / 195) (Dehalococcoides ethenogenes (strain 195)).